Reading from the N-terminus, the 189-residue chain is LLGRLAAIVANEVLLGHKVVVVRCEGINISGNFYRNKLKYLAFLRKRMNTNPSRGPYHFRAPSRIFWRTVRGMLPHKTKRGQAALERLKVFDGVPPPYDKRKRMVVPAALKIVRLKPTRKFALLGRLAHEVGWKYQAITATLEEKRKEKAKIRYAKKKTVTKLSKLAEKNVESTISKYTAVLKQYGVLV.

The protein belongs to the universal ribosomal protein uL13 family.

In Salmo trutta (Brown trout), this protein is Large ribosomal subunit protein uL13 (rpl13a).